We begin with the raw amino-acid sequence, 71 residues long: uncharacterized protein (71 aa).

A helical membrane pass occupies residues 2–24 (IIAIVAVVIFLLNFLTPYGYMPM). The tract at residues 48-71 (PAESSSNGGSMITKPSTGACQGGR) is disordered. A compositionally biased stretch (polar residues) spans 49–71 (AESSSNGGSMITKPSTGACQGGR).

The protein localises to the membrane. This is an uncharacterized protein from Archaeoglobus fulgidus (strain ATCC 49558 / DSM 4304 / JCM 9628 / NBRC 100126 / VC-16).